A 2414-amino-acid polypeptide reads, in one-letter code: Centrosome-associated protein CEP250 (2414 aa).

2 coiled-coil regions span residues 91–153 (EEPN…ELVR) and 248–357 (LVAK…VEEE). Disordered regions lie at residues 356–384 (EEDT…DPQD), 672–707 (AEEA…QETA), 1191–1212 (SRPE…DPDQ), 1269–1303 (EAQK…QNSL), 2050–2071 (AGAR…QERQ), 2194–2238 (ALEE…KERL), and 2275–2317 (RERR…GSSD). Positions 371–381 (QSDCNGLSQFD) are enriched in polar residues. The stretch at 400 to 1165 (QQAVQDLRQQ…QLEALVAEQQ (766 aa)) forms a coiled coil. Positions 684 to 704 (RGTREEKEELKDKLSEAHHQQ) are enriched in basic and acidic residues. Coiled-coil stretches lie at residues 1237–2200 (LQKL…EQQS) and 2231–2290 (GVEE…ASRA). Low complexity predominate over residues 1280 to 1289 (QDLQRQLSQS). Polar residues predominate over residues 2196 to 2209 (EEQQSGGPHSTSRA). Positions 2275 to 2286 (RERRKLKRDSVR) are enriched in basic and acidic residues. At S2292 the chain carries Phosphoserine. The span at 2305 to 2317 (QQDGRGSQRGSSD) shows a compositional bias: low complexity. Positions 2320–2345 (LVVELQREVALLRAQLALERKQRQDY) form a coiled coil. 2 positions are modified to phosphoserine; by NEK2: S2389 and S2393. The interval 2390–2414 (LNQSLTSPGPCLLHPSLDTTQNTHR) is disordered.

As to quaternary structure, monomer and homodimer. Forms a complex in vitro with both NEK2 kinase and the PPP1CC catalytic subunit of protein phosphatase 1 (PP1). Interacts with CEP135. Interacts with CROCC/rootletin. Interacts with CNTLN. Interacts with NIN (via C-terminus). In terms of processing, differentially phosphorylated during cell cycle. Phosphorylation may regulate association/dissociation from centrosome. During M phase of mitosis, C-terminal part is phosphorylated by NEK2, suggesting that it may trigger the dissociation from the mitotic centrosome. Dephosphorylated in vitro by the PP1 phosphatase. Expressed in the retina.

Its subcellular location is the cytoplasm. The protein localises to the perinuclear region. It localises to the cytoskeleton. It is found in the microtubule organizing center. The protein resides in the centrosome. Its subcellular location is the centriole. The protein localises to the cilium basal body. It localises to the cell projection. It is found in the cilium. The protein resides in the photoreceptor outer segment. Its subcellular location is the photoreceptor inner segment. Plays an important role in centrosome cohesion during interphase. Recruits CCDC102B to the proximal ends of centrioles. Maintains centrosome cohesion by forming intercentriolar linkages. Accumulates at the proximal end of each centriole, forming supramolecular assemblies with viscous material properties that promote organelle cohesion. May be involved in ciliogenesis. In Mus musculus (Mouse), this protein is Centrosome-associated protein CEP250 (Cep250).